Here is a 178-residue protein sequence, read N- to C-terminus: Deoxycytidylate deaminase (178 aa).

Residues 14-145 form the CMP/dCMP-type deaminase domain; the sequence is EWPEYFMAVA…DEATAARLLF (132 aa). Zn(2+) is bound at residue H84. E86 (proton donor) is an active-site residue. Residues C110 and C113 each coordinate Zn(2+). Phosphoserine is present on S174.

This sequence belongs to the cytidine and deoxycytidylate deaminase family. Homohexamer. Requires Zn(2+) as cofactor.

The enzyme catalyses dCMP + H2O + H(+) = dUMP + NH4(+). The catalysed reaction is 5-hydroxymethyl-dCMP + H2O + H(+) = 5-hydroxymethyl-dUMP + NH4(+). With respect to regulation, allosteric enzyme whose activity is greatly influenced by the end products of its metabolic pathway, dCTP and dTTP. Its function is as follows. Catalyzes the deamination of dCMP to dUMP, providing the nucleoside monophosphate substrate for the thymidylate synthase/TYMS. Also, part of a nucleotide salvage pathway that eliminates epigenetically modified 5-hydroxymethyl-dCMP (hmdCMP) in a two-step process entailing deamination to cytotoxic 5-hydroxymethyl-dUMP (hmdUMP), followed by its hydrolysis into 5-hydroxymethyluracil (hmU) and 2-deoxy-D-ribose 5-phosphate (deoxyribosephosphate). Catalyzes the first step in that pathway, the deamination of 5-hydroxymethyl-dCMP (hmdCMP). This chain is Deoxycytidylate deaminase, found in Homo sapiens (Human).